A 130-amino-acid chain; its full sequence is Small ribosomal subunit protein uS17m (130 aa).

A mitochondrion-targeting transit peptide spans 1–20 (MSVVRSSVHARWIVGKVIGT).

Belongs to the universal ribosomal protein uS17 family. In terms of assembly, component of the mitochondrial small ribosomal subunit (mt-SSU). Mature mammalian 55S mitochondrial ribosomes consist of a small (28S) and a large (39S) subunit. The 28S small subunit contains a 12S ribosomal RNA (12S mt-rRNA) and 30 different proteins. The 39S large subunit contains a 16S rRNA (16S mt-rRNA), a copy of mitochondrial valine transfer RNA (mt-tRNA(Val)), which plays an integral structural role, and 52 different proteins.

It localises to the mitochondrion. The chain is Small ribosomal subunit protein uS17m (MRPS17) from Homo sapiens (Human).